Consider the following 156-residue polypeptide: Peptide methionine sulfoxide reductase MsrA (156 aa).

Cys-10 is an active-site residue.

Belongs to the MsrA Met sulfoxide reductase family.

It catalyses the reaction L-methionyl-[protein] + [thioredoxin]-disulfide + H2O = L-methionyl-(S)-S-oxide-[protein] + [thioredoxin]-dithiol. The catalysed reaction is [thioredoxin]-disulfide + L-methionine + H2O = L-methionine (S)-S-oxide + [thioredoxin]-dithiol. Its function is as follows. Has an important function as a repair enzyme for proteins that have been inactivated by oxidation. Catalyzes the reversible oxidation-reduction of methionine sulfoxide in proteins to methionine. This is Peptide methionine sulfoxide reductase MsrA from Metamycoplasma arthritidis (strain 158L3-1) (Mycoplasma arthritidis).